A 280-amino-acid chain; its full sequence is Transmembrane protein 119 (280 aa).

A signal peptide spans 1 to 20 (MVPWFLLSLLLLARPVPGVA). Over 21–91 (YSVSLPASFL…IMDFFRQYVM (71 aa)) the chain is Extracellular. The O-linked (Xyl...) (chondroitin sulfate) serine glycan is linked to Ser36. Residues 38–47 (EAEGSSASSP) are compositionally biased toward low complexity. The disordered stretch occupies residues 38-73 (EAEGSSASSPSLPPPGTPAFSPTPERPQPTALDGPV). A helical transmembrane segment spans residues 92 to 112 (LIAVVGSLTFLIMFIVCAALI). At 113–280 (TRQKHKATAY…CACNRVSPSV (168 aa)) the chain is on the cytoplasmic side. Disordered regions lie at residues 133–162 (VDQR…EGLD) and 181–280 (PARA…SPSV). A compositionally biased stretch (basic and acidic residues) spans 148–162 (VPDRAPDSRHEEGLD). Ser269 carries the post-translational modification Phosphoserine.

Interacts with SMAD1, SMAD5 and RUNX2. Expressed in spermatocytes and spermatids in the developing testis (at protein level). Expressed in the brain, heart, lung, spleen, skeletal muscle, ovary, testis and epididymis. Predominantly expressed in osteoblasts.

The protein resides in the cell membrane. Its subcellular location is the cytoplasm. It localises to the endoplasmic reticulum membrane. It is found in the secreted. Plays an important role in bone formation and normal bone mineralization. Promotes the differentiation of myoblasts into osteoblasts. May induce the commitment and differentiation of myoblasts into osteoblasts through an enhancement of BMP2 production and interaction with the BMP-RUNX2 pathway. Up-regulates the expression of ATF4 which plays a central role in osteoblast differentiation. Essential for normal spermatogenesis and late testicular differentiation. The chain is Transmembrane protein 119 (Tmem119) from Mus musculus (Mouse).